Consider the following 141-residue polypeptide: Small ribosomal subunit protein eS12 (141 aa).

Belongs to the eukaryotic ribosomal protein eS12 family. Component of the small ribosomal subunit. Mature ribosomes consist of a small (40S) and a large (60S) subunit. The 40S subunit contains about 32 different proteins and 1 molecule of RNA (18S). The 60S subunit contains about 42 different proteins and 3 molecules of RNA (28S, 5.8S and 5S).

The protein localises to the cytoplasm. Component of the ribosome, a large ribonucleoprotein complex responsible for the synthesis of proteins in the cell. The small ribosomal subunit (SSU) binds messenger RNAs (mRNAs) and translates the encoded message by selecting cognate aminoacyl-transfer RNA (tRNA) molecules. The large subunit (LSU) contains the ribosomal catalytic site termed the peptidyl transferase center (PTC), which catalyzes the formation of peptide bonds, thereby polymerizing the amino acids delivered by tRNAs into a polypeptide chain. The nascent polypeptides leave the ribosome through a tunnel in the LSU and interact with protein factors that function in enzymatic processing, targeting, and the membrane insertion of nascent chains at the exit of the ribosomal tunnel. This Plasmodium falciparum (isolate 3D7) protein is Small ribosomal subunit protein eS12.